We begin with the raw amino-acid sequence, 89 residues long: Small ribosomal subunit protein uS15 (89 aa).

This sequence belongs to the universal ribosomal protein uS15 family. As to quaternary structure, part of the 30S ribosomal subunit. Forms a bridge to the 50S subunit in the 70S ribosome, contacting the 23S rRNA.

Functionally, one of the primary rRNA binding proteins, it binds directly to 16S rRNA where it helps nucleate assembly of the platform of the 30S subunit by binding and bridging several RNA helices of the 16S rRNA. Its function is as follows. Forms an intersubunit bridge (bridge B4) with the 23S rRNA of the 50S subunit in the ribosome. The sequence is that of Small ribosomal subunit protein uS15 from Shewanella sediminis (strain HAW-EB3).